A 312-amino-acid chain; its full sequence is MNAGILGVGKYVPEKILTNFDLEKMMETSDEWIRTRTGIEERRIARDDEYTHDLAYEAAKVAIENAGLTPDDIDLFIVATVTQEATFPSVANIIQDRLGAKNAAGMDVEAACAGFTFGVVTAAQFIKTGAYKNIVVVGADKLSKITNWDDRATAVLFGDGAGAVVMGPVSDDHGLLSFDLGSDGSGGKYLNLDENKKIYMNGREVFRFAVRQMGEASLRVLESAGLEKEDLDLLIPHQANIRIMEASRERLNLPEEKLMKTVHKYGNTSSSSIALALVDAVEEGRIKDNDNVLLVGFGGGLTWGALIIRWGK.

Active-site residues include cysteine 112 and histidine 237. The ACP-binding stretch occupies residues 238-242 (QANIR). Residue asparagine 267 is part of the active site.

The protein belongs to the thiolase-like superfamily. FabH family. As to quaternary structure, homodimer.

It is found in the cytoplasm. The catalysed reaction is malonyl-[ACP] + acetyl-CoA + H(+) = 3-oxobutanoyl-[ACP] + CO2 + CoA. It functions in the pathway lipid metabolism; fatty acid biosynthesis. In terms of biological role, catalyzes the condensation reaction of fatty acid synthesis by the addition to an acyl acceptor of two carbons from malonyl-ACP. Catalyzes the first condensation reaction which initiates fatty acid synthesis and may therefore play a role in governing the total rate of fatty acid production. Possesses both acetoacetyl-ACP synthase and acetyl transacylase activities. Its substrate specificity determines the biosynthesis of branched-chain and/or straight-chain of fatty acids. The sequence is that of Beta-ketoacyl-[acyl-carrier-protein] synthase III from Listeria innocua serovar 6a (strain ATCC BAA-680 / CLIP 11262).